Here is a 284-residue protein sequence, read N- to C-terminus: Bifunctional protein FolD (284 aa).

NADP(+) contacts are provided by residues 165 to 167 (GAS), S190, and I231.

Belongs to the tetrahydrofolate dehydrogenase/cyclohydrolase family. In terms of assembly, homodimer.

It carries out the reaction (6R)-5,10-methylene-5,6,7,8-tetrahydrofolate + NADP(+) = (6R)-5,10-methenyltetrahydrofolate + NADPH. The catalysed reaction is (6R)-5,10-methenyltetrahydrofolate + H2O = (6R)-10-formyltetrahydrofolate + H(+). The protein operates within one-carbon metabolism; tetrahydrofolate interconversion. In terms of biological role, catalyzes the oxidation of 5,10-methylenetetrahydrofolate to 5,10-methenyltetrahydrofolate and then the hydrolysis of 5,10-methenyltetrahydrofolate to 10-formyltetrahydrofolate. The polypeptide is Bifunctional protein FolD (Polynucleobacter necessarius subsp. necessarius (strain STIR1)).